Reading from the N-terminus, the 317-residue chain is Pantothenate kinase (317 aa).

Gly-101–Ser-108 is an ATP binding site.

It belongs to the prokaryotic pantothenate kinase family.

It is found in the cytoplasm. The enzyme catalyses (R)-pantothenate + ATP = (R)-4'-phosphopantothenate + ADP + H(+). The protein operates within cofactor biosynthesis; coenzyme A biosynthesis; CoA from (R)-pantothenate: step 1/5. The protein is Pantothenate kinase of Actinobacillus succinogenes (strain ATCC 55618 / DSM 22257 / CCUG 43843 / 130Z).